The primary structure comprises 309 residues: Protein CbbX (309 aa).

74–81 (GNPGTGKT) is a binding site for ATP.

This sequence belongs to the CbxX/CfxQ family. Forms homohexameric rings. The oligomeric transition is triggered by ribulose 1,5-biphosphate.

In terms of biological role, ATPase involved in the activation of red-type RuBisCo (ribulose-1,5-bisphosphate carboxylase/oxygenase), which tends to form inactive complexes with its substrate ribulose 1,5-bisphosphate (RuBP). Catalyzes the release of RuBP from inhibited RuBisCo in an ATP-dependent manner. Activation of RuBisCO involves the ATP-dependent carboxylation of the epsilon-amino group of lysine leading to a carbamate structure. The protein is Protein CbbX (cbbX) of Cereibacter sphaeroides (Rhodobacter sphaeroides).